Here is a 98-residue protein sequence, read N- to C-terminus: High mobility group nucleosome-binding domain-containing protein 3 (98 aa).

4 stretches are compositionally biased toward basic and acidic residues: residues 1 to 25, 39 to 52, 61 to 71, and 80 to 98; these read MPKR…EPTR, PEPK…KEPG, GKKDEKQEAAK, and GENK…DKNE. Residues 1-98 are disordered; that stretch reads MPKRKSPEGA…KTESVGDKNE (98 aa).

The protein belongs to the HMGN family.

Its subcellular location is the nucleus. The polypeptide is High mobility group nucleosome-binding domain-containing protein 3 (HMGN3) (Gallus gallus (Chicken)).